Consider the following 417-residue polypeptide: Acetate kinase (417 aa).

Asn9 is a Mg(2+) binding site. Residue Lys16 coordinates ATP. Arg90 contributes to the substrate binding site. Catalysis depends on Asp147, which acts as the Proton donor/acceptor. ATP-binding positions include 207–211, 282–284, and 330–334; these read HIGNG, DLR, and GIGEN. Position 384 (Glu384) interacts with Mg(2+).

It belongs to the acetokinase family. Homodimer. Requires Mg(2+) as cofactor. Mn(2+) is required as a cofactor.

It is found in the cytoplasm. It catalyses the reaction acetate + ATP = acetyl phosphate + ADP. It participates in metabolic intermediate biosynthesis; acetyl-CoA biosynthesis; acetyl-CoA from acetate: step 1/2. Its function is as follows. Catalyzes the formation of acetyl phosphate from acetate and ATP. Can also catalyze the reverse reaction. The protein is Acetate kinase of Staphylococcus epidermidis (strain ATCC 35984 / DSM 28319 / BCRC 17069 / CCUG 31568 / BM 3577 / RP62A).